A 482-amino-acid polypeptide reads, in one-letter code: MSKKLTTAAGCPVAHNQNVQTAGKRGPQLLQDVWFLEKLAHFDREVIPERRMHAKGSGAYGTFTVTHDITKYTKAKLFSEIGKQTELFARFTTVAGERGAADAERDIRGFALKFYTEEGNWDLVGNNTPVFFLRDPLKFPDLNHAVKRDPRTNMRSAKNNWDFWTSLPEALHQVTIVMSDRGIPATYRHMHGFGSHTFSFINSDNERFWVKFHFKSQQGIKNLSDAEAAQVIGQDRESHQRDLLESIDNQDFPKWTLKVQIMPEADAATVPYNPFDLTKVWPHKDYPLIEVGEFELNRNPQNFFAEVEQSAFNPANVVPGISFSPDKMLQGRLFAYGDAQRYRLGVNHQHIPVNAPRCPVHSYHRDGAMRVDGNFGSTLGYEPNNEGQWAEQPDFAEPALNLDGAAAHWDHREDEDYFSQPGDLFRLMTAEQQAILFDNTARNLNGVPKEIQLRHLRHCYKADPAYGEGIGKLLDIDVSEFN.

Active-site residues include His53 and Asn126. A heme-binding site is contributed by Tyr336.

The protein belongs to the catalase family. Heme serves as cofactor.

It is found in the periplasm. It catalyses the reaction 2 H2O2 = O2 + 2 H2O. Functionally, decomposes hydrogen peroxide into water and oxygen; serves to protect cells from the toxic effects of hydrogen peroxide. Could protect cells in nodules which have a high potential to produce hydrogen peroxide because of the strong reducing conditions required for nitrogen fixation and the action of several proteins. This Aliivibrio fischeri (strain ATCC 700601 / ES114) (Vibrio fischeri) protein is Catalase (katA).